Reading from the N-terminus, the 356-residue chain is 4-hydroxybenzoate polyprenyltransferase, mitochondrial (356 aa).

Residues 1–44 constitute a mitochondrion transit peptide; it reads MITRSIGIARRSNSINCIVGSNTSTSYSLDESTKRWISTSTKQP. Transmembrane regions (helical) follow at residues 71 to 91, 93 to 113, 150 to 170, 195 to 215, 269 to 289, and 332 to 352; these read VDKP…IAMA, PAGQ…AFLM, AIGL…QLNW, WPQF…WCAL, WLSA…IASD, and IILF…QILI.

This sequence belongs to the UbiA prenyltransferase family. It depends on Mg(2+) as a cofactor.

Its subcellular location is the mitochondrion inner membrane. It carries out the reaction an all-trans-polyprenyl diphosphate + 4-hydroxybenzoate = a 4-hydroxy-3-(all-trans-polyprenyl)benzoate + diphosphate. It participates in cofactor biosynthesis; ubiquinone biosynthesis. Catalyzes the prenylation of para-hydroxybenzoate (PHB) with an all-trans polyprenyl group. Mediates the second step in the final reaction sequence of coenzyme Q (CoQ) biosynthesis, which is the condensation of the polyisoprenoid side chain with PHB, generating the first membrane-bound Q intermediate. This chain is 4-hydroxybenzoate polyprenyltransferase, mitochondrial (coq-2), found in Caenorhabditis elegans.